The primary structure comprises 110 residues: UPF0122 protein Sca_0859 (110 aa).

The protein belongs to the UPF0122 family.

In terms of biological role, might take part in the signal recognition particle (SRP) pathway. This is inferred from the conservation of its genetic proximity to ftsY/ffh. May be a regulatory protein. In Staphylococcus carnosus (strain TM300), this protein is UPF0122 protein Sca_0859.